Here is a 227-residue protein sequence, read N- to C-terminus: 2,3-bisphosphoglycerate-dependent phosphoglycerate mutase (227 aa).

Residues 7-14, 20-21, arginine 59, 86-89, lysine 97, 113-114, and 182-183 contribute to the substrate site; these read RHGQSEWN, TG, ERHY, RR, and GN. The active-site Tele-phosphohistidine intermediate is the histidine 8. Glutamate 86 (proton donor/acceptor) is an active-site residue.

This sequence belongs to the phosphoglycerate mutase family. BPG-dependent PGAM subfamily. As to quaternary structure, homodimer.

It catalyses the reaction (2R)-2-phosphoglycerate = (2R)-3-phosphoglycerate. It functions in the pathway carbohydrate degradation; glycolysis; pyruvate from D-glyceraldehyde 3-phosphate: step 3/5. Catalyzes the interconversion of 2-phosphoglycerate and 3-phosphoglycerate. The polypeptide is 2,3-bisphosphoglycerate-dependent phosphoglycerate mutase (Neisseria meningitidis serogroup C (strain 053442)).